Consider the following 348-residue polypeptide: N-acetyl-gamma-glutamyl-phosphate reductase (348 aa).

C149 is an active-site residue.

This sequence belongs to the NAGSA dehydrogenase family. Type 1 subfamily.

It is found in the cytoplasm. The catalysed reaction is N-acetyl-L-glutamate 5-semialdehyde + phosphate + NADP(+) = N-acetyl-L-glutamyl 5-phosphate + NADPH + H(+). The protein operates within amino-acid biosynthesis; L-arginine biosynthesis; N(2)-acetyl-L-ornithine from L-glutamate: step 3/4. Its function is as follows. Catalyzes the NADPH-dependent reduction of N-acetyl-5-glutamyl phosphate to yield N-acetyl-L-glutamate 5-semialdehyde. The chain is N-acetyl-gamma-glutamyl-phosphate reductase from Cellvibrio japonicus (strain Ueda107) (Pseudomonas fluorescens subsp. cellulosa).